A 721-amino-acid chain; its full sequence is Protein mu-NS (721 aa).

An interaction with sigma-NS region spans residues 1 to 13; that stretch reads MASFKGFSVNTVP. The RNA-binding stretch occupies residues 1-38; that stretch reads MASFKGFSVNTVPVSKAKRDISSLAATPGIRSQPFTPS. The interval 14-40 is interaction with mu-2; that stretch reads VSKAKRDISSLAATPGIRSQPFTPSVD. Residues 471 to 721 are involved in the formation of factory-like inclusions; that stretch reads SSDMVDGIKL…IDFSVPTDEL (251 aa). Coiled-coil stretches lie at residues 523–560 and 628–686; these read LLSQ…SAQA and QMNG…NQRQ.

It belongs to the orthoreovirus mu-NS protein family. In terms of assembly, interacts with mu-2. Interacts with sigma-NS; in viral factories. Interacts with the inner capsid proteins lambda-1 and sigma-2, and outer capsid protein lambda-2; in viral factories. The N-terminus is blocked.

It is found in the host cytoplasm. Non-structural protein implicated with protein sigma-NS in forming the matrix of viral factories, which are large inclusions in the host cytoplasm where replication intermediates are assembled and viral RNA replication takes place. Together with mu-2, recruits the other core proteins to these factories. The sequence is that of Protein mu-NS (M3) from Mammalia (T1L).